A 953-amino-acid chain; its full sequence is Translation initiation factor IF-2 (953 aa).

Positions 53–368 are disordered; it reads AKKAVAGTSE…PVTERKFHEL (316 aa). 2 stretches are compositionally biased toward basic and acidic residues: residues 135-151 and 162-190; these read FKAEREARAKEQAERRK and RNDRNDRRNNQNDRNDRNSQNRNDRRNRQ. The span at 191 to 214 shows a compositional bias: low complexity; it reads EQGNQHRNQGQSQYNQQRQSFNQG. Residues 236–266 show a composition bias toward basic and acidic residues; it reads RSSEERFKQAKANKEALREQNKRKEQAKLED. Over residues 274 to 288 the composition is skewed to low complexity; that stretch reads PKPTAKAPATPAPTA. Positions 301–318 are enriched in basic and acidic residues; the sequence is ARPDKERDNFDHEEDGPR. Positions 332-341 are enriched in low complexity; that stretch reads NQKNSNWNNN. In terms of domain architecture, tr-type G spans 455 to 622; that stretch reads ERPPVVTIMG…TVLLVAEIQE (168 aa). The G1 stretch occupies residues 464-471; the sequence is GHVDHGKT. Position 464–471 (464–471) interacts with GTP; the sequence is GHVDHGKT. The interval 489–493 is G2; it reads GITQH. The interval 510–513 is G3; it reads DTPG. Residues 510 to 514 and 564 to 567 each bind GTP; these read DTPGH and NKID. Positions 564-567 are G4; the sequence is NKID. Residues 600–602 are G5; it reads SAK.

Belongs to the TRAFAC class translation factor GTPase superfamily. Classic translation factor GTPase family. IF-2 subfamily.

The protein localises to the cytoplasm. Its function is as follows. One of the essential components for the initiation of protein synthesis. Protects formylmethionyl-tRNA from spontaneous hydrolysis and promotes its binding to the 30S ribosomal subunits. Also involved in the hydrolysis of GTP during the formation of the 70S ribosomal complex. The protein is Translation initiation factor IF-2 of Streptococcus gordonii (strain Challis / ATCC 35105 / BCRC 15272 / CH1 / DL1 / V288).